Reading from the N-terminus, the 140-residue chain is Photosystem I reaction center subunit XI (140 aa).

The next 3 helical transmembrane spans lie at 48 to 68 (LEIG…LGPL), 79 to 99 (LLSA…YGAV), and 119 to 139 (SGFL…LTLF).

Belongs to the PsaL family.

The protein localises to the plastid. Its subcellular location is the chloroplast thylakoid membrane. The polypeptide is Photosystem I reaction center subunit XI (Cyanidioschyzon merolae (strain NIES-3377 / 10D) (Unicellular red alga)).